The following is a 1461-amino-acid chain: Phospholipid-transporting ATPase VB (1461 aa).

The Cytoplasmic segment spans residues 1-82 (MALSVDSSWH…TTKYTLFTFL (82 aa)). Residues 83–104 (PRNLFEQFHRWANLYFLFLVIL) form a helical membrane-spanning segment. The Exoplasmic loop segment spans residues 105–110 (NWMPSM). The chain crosses the membrane as a helical span at residues 111-132 (EVFHREITMLPLAIVLFVIMIK). Over 133–316 (DGMEDFKRHR…SKIERRMNID (184 aa)) the chain is Cytoplasmic. A helical membrane pass occupies residues 317–338 (IFFCIGILILMCLIGAVGHSIW). The Exoplasmic loop segment spans residues 339–368 (NGTFEEHPPFDVPDANGSFLPSALGGFYMF). Residues 369–390 (LTMIILLQVLIPISLYVSIELV) traverse the membrane as a helical segment. The Cytoplasmic segment spans residues 391–1111 (KLGQVFFLSN…GHWCYSRLAR (721 aa)). Residue Asp433 is the 4-aspartylphosphate intermediate of the active site. ATP is bound by residues Asp433, Lys434, and Thr435. Residue Asp433 participates in Mg(2+) binding. Thr435 contacts Mg(2+). 2 stretches are compositionally biased toward polar residues: residues 496 to 511 (MRSQKGAQPLRRSQSA) and 530 to 539 (SQPPVAFSSS). Disordered stretches follow at residues 496–541 (MRSQ…SSIE) and 640–687 (TAPS…MWDQ). Residues Glu724, Phe766, Lys790, Arg835, Thr915, Gly916, Asp917, Arg1029, and Lys1035 each contribute to the ATP site. Asp1055 is a binding site for Mg(2+). 2 residues coordinate ATP: Asn1058 and Asp1059. Asp1059 is a Mg(2+) binding site. The chain crosses the membrane as a helical span at residues 1112 to 1132 (MVVYYLYKNVCYVNLLFWYQF). The Exoplasmic loop portion of the chain corresponds to 1133-1144 (FCGFSSSTMIDY). A helical membrane pass occupies residues 1145-1164 (WQMIFFNLFFTSLPPLVFGV). Residues 1165 to 1194 (LDKDISAETLLALPELYKSGQNSECYNLST) are Cytoplasmic-facing. Residues 1195–1216 (FWISMVDAFYQSLICFFIPYLA) form a helical membrane-spanning segment. Residues 1217–1223 (YKGSDID) lie on the Exoplasmic loop side of the membrane. A helical membrane pass occupies residues 1224-1246 (VFTFGTPINTISLTTILLHQAME). At 1247 to 1252 (MKTWTI) the chain is on the cytoplasmic side. Residues 1253-1273 (FHGVVLLGSFLMYFLVSLLYN) form a helical membrane-spanning segment. Topologically, residues 1274-1291 (ATCVICNSPTNPYWVMEG) are exoplasmic loop. A helical transmembrane segment spans residues 1292-1316 (QLSNPTFYLVCFLTPVVALLPRYFF). Over 1317–1461 (LSLQGTCGKS…HRRSQSSLTI (145 aa)) the chain is Cytoplasmic. The segment at 1346–1397 (IQSWRSRQRPAPVPEVARPTHHPVSSITGQDFSASTPKSSNPPKRKHVEESV) is disordered. Residues 1368-1387 (PVSSITGQDFSASTPKSSNP) show a composition bias toward polar residues.

The protein belongs to the cation transport ATPase (P-type) (TC 3.A.3) family. Type IV subfamily. As to quaternary structure, component of a P4-ATPase flippase complex which consists of a catalytic alpha subunit ATP10B and an accessory beta subunit TMEM30A. Requires Mg(2+) as cofactor. Autophosphorylated at the conserved aspartate of the P-type ATPase signature sequence. As to expression, expressed in predominantly in brain structures including medulla oblongata, substantia nigra and basal ganglia. Expressed in the gastrointestinal system with highest levels in the small intestine and colon. Also expressed at low levels in testis and thymus.

The protein localises to the late endosome membrane. It localises to the lysosome membrane. The protein resides in the endoplasmic reticulum membrane. The enzyme catalyses ATP + H2O + phospholipidSide 1 = ADP + phosphate + phospholipidSide 2.. The catalysed reaction is a beta-D-glucosyl-(1&lt;-&gt;1')-N-acylsphing-4-enine(out) + ATP + H2O = a beta-D-glucosyl-(1&lt;-&gt;1')-N-acylsphing-4-enine(in) + ADP + phosphate + H(+). In terms of biological role, catalytic component of a P4-ATPase flippase complex, which catalyzes the hydrolysis of ATP coupled to the transport of glucosylceramide (GlcCer) from the outer to the inner leaflet of lysosome membranes. Plays an important role in the maintenance of lysosome membrane integrity and function in cortical neurons. In Homo sapiens (Human), this protein is Phospholipid-transporting ATPase VB.